We begin with the raw amino-acid sequence, 61 residues long: Sperm protamine P1 (61 aa).

A disordered region spans residues 1–61; it reads MARYRHSRSR…RRYSRRRRRY (61 aa).

The protein belongs to the protamine P1 family. In terms of tissue distribution, testis.

It is found in the nucleus. The protein localises to the chromosome. Its function is as follows. Protamines substitute for histones in the chromatin of sperm during the haploid phase of spermatogenesis. They compact sperm DNA into a highly condensed, stable and inactive complex. The chain is Sperm protamine P1 (PRM1) from Potorous longipes (Long-footed potoroo).